Reading from the N-terminus, the 80-residue chain is RNA-binding protein KhpA (80 aa).

A KH domain is found at 33–80; the sequence is GRTVEVHVHPDDLGKVIGRGGRTATALRTLVAGIGGRGIRVDVVDTDQ.

Belongs to the KhpA RNA-binding protein family.

The protein resides in the cytoplasm. Functionally, a probable RNA-binding protein. The protein is RNA-binding protein KhpA of Mycobacterium bovis (strain ATCC BAA-935 / AF2122/97).